Reading from the N-terminus, the 39-residue chain is Potassium channel toxin alpha-KTx 2.5 (39 aa).

3 disulfides stabilise this stretch: C7–C29, C13–C34, and C17–C36.

It belongs to the short scorpion toxin superfamily. Potassium channel inhibitor family. Alpha-KTx 02 subfamily. As to expression, expressed by the venom gland.

The protein localises to the secreted. Functionally, potent selective inhibitor of Kv1.1/KCNA1, Kv1.2/KCNA2, Kv1.3/KCNA3 voltage-gated potassium channels. Weak inhibitor of Kv1.6/KCNA6 potassium channel. It also shows a weak interaction with nicotinic acetylcholine receptors (nAChR), suggesting it may weakly inhibit it. The chain is Potassium channel toxin alpha-KTx 2.5 from Centruroides limbatus (Bark scorpion).